The chain runs to 481 residues: U6 small nuclear RNA (adenine-(43)-N(6))-methyltransferase (481 aa).

Positions 82, 108, 131, 164, and 184 each coordinate S-adenosyl-L-methionine.

It belongs to the methyltransferase superfamily. METTL16/RlmF family. As to quaternary structure, self-associates. Interacts with dlc-1; the interaction is direct, and is required for nuclear localization of mett-10.

It is found in the nucleus. The enzyme catalyses an adenosine in mRNA + S-adenosyl-L-methionine = an N(6)-methyladenosine in mRNA + S-adenosyl-L-homocysteine + H(+). It carries out the reaction adenosine in U6 snRNA + S-adenosyl-L-methionine = N(6)-methyladenosine in U6 snRNA + S-adenosyl-L-homocysteine + H(+). RNA N6-methyltransferase that methylates adenosine residues at the N(6) position of a subset of RNAs and is involved in S-adenosyl-L-methionine homeostasis by regulating splicing of S-adenosylmethionine synthase transcripts (sams-3, sams-4 and sams-5). Able to N6-methylate a subset of mRNAs containing the 5'UACAGAAAC-3' nonamer sequence. Plays a key role in S-adenosyl-L-methionine homeostasis: under rich-diet conditions, catalyzes N6-methylation of S-adenosylmethionine synthase mRNAs (sams-3, sams-4 and sams-5), directly inhibiting splicing and protein production of S-adenosylmethionine synthase. In addition to mRNAs, also able to mediate N6-methylation of U6 small nuclear RNA (U6 snRNA). Required for gamete production, inhibiting germ cell proliferative fate and ensuring germ cell meiotic development. Also promotes progression of the mitotic cell cycle in those germ cells that continue to proliferate. Plays a role in the development of the vulva, somatic gonad and embryo. In Caenorhabditis briggsae, this protein is U6 small nuclear RNA (adenine-(43)-N(6))-methyltransferase.